Reading from the N-terminus, the 270-residue chain is MLDIIILVVIGGAFGAMTREFIMLMVPPLTDGFPLDILVANVVACFLLGTVTALYARKIHSRDVHTIIGTGMMGGVSTFSSFAYGSVVLASASMSAFLIAAAYVTVSVVAGYVAVLAGMKFGEKSADILHRYPPMASIIDSGLVTVESRHSVAETIERVAAKAKSMGMNVFTRVDHGAGAKEAGLGLPPTELIIFGNPQNGTVLMQDKRTIGLDLPIRALAWEDGSGKVWLTVNDPAWLAQRHSLGLSSDVAIKAMVTGTGTVTKYAAGD.

4 helical membrane passes run 4-24 (IIIL…FIML), 35-55 (LDIL…TALY), 67-87 (IIGT…YGSV), and 96-116 (AFLI…VAVL). Residues glycine 74 and serine 77 each contribute to the Na(+) site.

It belongs to the fluoride channel Fluc/FEX (TC 1.A.43) family.

The protein localises to the cell inner membrane. It carries out the reaction fluoride(in) = fluoride(out). Na(+) is not transported, but it plays an essential structural role and its presence is essential for fluoride channel function. In terms of biological role, fluoride-specific ion channel. Important for reducing fluoride concentration in the cell, thus reducing its toxicity. The sequence is that of Fluoride-specific ion channel FluC 1 from Brucella abortus biovar 1 (strain 9-941).